Reading from the N-terminus, the 366-residue chain is Chorismate synthase (366 aa).

Residue Arg-47 participates in NADP(+) binding. Residues 124-126 (RSS), Gly-286, 301-305 (KPVAT), and Arg-327 each bind FMN.

Belongs to the chorismate synthase family. Homotetramer. It depends on FMNH2 as a cofactor.

It carries out the reaction 5-O-(1-carboxyvinyl)-3-phosphoshikimate = chorismate + phosphate. It functions in the pathway metabolic intermediate biosynthesis; chorismate biosynthesis; chorismate from D-erythrose 4-phosphate and phosphoenolpyruvate: step 7/7. In terms of biological role, catalyzes the anti-1,4-elimination of the C-3 phosphate and the C-6 proR hydrogen from 5-enolpyruvylshikimate-3-phosphate (EPSP) to yield chorismate, which is the branch point compound that serves as the starting substrate for the three terminal pathways of aromatic amino acid biosynthesis. This reaction introduces a second double bond into the aromatic ring system. The chain is Chorismate synthase from Methylacidiphilum infernorum (isolate V4) (Methylokorus infernorum (strain V4)).